Reading from the N-terminus, the 210-residue chain is Proteasome subunit beta (210 aa).

A propeptide spans 1-9 (MIHDKVFKG) (removed in mature form; by autocatalysis). The Nucleophile role is filled by T10.

The protein belongs to the peptidase T1B family. The 20S proteasome core is composed of 14 alpha and 14 beta subunits that assemble into four stacked heptameric rings, resulting in a barrel-shaped structure. The two inner rings, each composed of seven catalytic beta subunits, are sandwiched by two outer rings, each composed of seven alpha subunits. The catalytic chamber with the active sites is on the inside of the barrel. Has a gated structure, the ends of the cylinder being occluded by the N-termini of the alpha-subunits. Is capped at one or both ends by the proteasome regulatory ATPase, PAN.

It is found in the cytoplasm. It carries out the reaction Cleavage of peptide bonds with very broad specificity.. With respect to regulation, the formation of the proteasomal ATPase PAN-20S proteasome complex, via the docking of the C-termini of PAN into the intersubunit pockets in the alpha-rings, triggers opening of the gate for substrate entry. Interconversion between the open-gate and close-gate conformations leads to a dynamic regulation of the 20S proteasome proteolysis activity. Its function is as follows. Component of the proteasome core, a large protease complex with broad specificity involved in protein degradation. The chain is Proteasome subunit beta from Ferroglobus placidus (strain DSM 10642 / AEDII12DO).